Reading from the N-terminus, the 341-residue chain is UDP-glucose 4-epimerase (341 aa).

The protein belongs to the polysaccharide synthase family.

It carries out the reaction UDP-alpha-D-glucose = UDP-alpha-D-galactose. Functionally, epimerizes UDP-galactose to UDP-glucose. May contribute to formation of LPS or the exopolysaccharide slime layer by providing UDP-galactose as a substrate for either molecule. In Rickettsia prowazekii (strain Madrid E), this protein is UDP-glucose 4-epimerase (capD).